The following is a 110-amino-acid chain: uncharacterized protein (110 aa).

Positions 1-72 are disordered; that stretch reads MWRSSNQRGV…NHRNIHLRNP (72 aa). Positions 10-23 are enriched in basic residues; sequence VSRRRDKSMRKYTR. The segment covering 48–57 has biased composition (polar residues); that stretch reads KNTYTGNISS.

This is an uncharacterized protein from Human herpesvirus 6A (strain Uganda-1102) (HHV-6 variant A).